Consider the following 1353-residue polypeptide: Inhibitor of Bruton tyrosine kinase (1353 aa).

ANK repeat units follow at residues 51–80 (FGRN…DLLV) and 85–114 (SGWT…SLYI). RCC1 repeat units follow at residues 141–194 (PTDV…FLSQ), 195–246 (KGQV…VLTE), and 248–301 (GCVY…LWTR). 2 consecutive BTB domains span residues 564 to 644 (HDVT…DFLT) and 768 to 836 (CDVT…VVIK). Residues 806–835 (SSCAALEMPIHSDILKVILDYLYTDEAVVI) form an ANK 3 repeat. Residues 970 to 1001 (HSETMFKKAKTKAKKKPRKRSDSSGGYNLSDI) are disordered. A compositionally biased stretch (basic residues) spans 976 to 988 (KKAKTKAKKKPRK). Serine 990 is modified (phosphoserine). Residues 992-1001 (SSGGYNLSDI) show a composition bias toward polar residues. Phosphoserine occurs at positions 1004, 1030, 1033, 1039, 1045, 1054, 1083, 1111, 1113, and 1116. Residues 1134-1155 (KCGATPKSHLGKTVSHGVKLSQ) form a disordered region.

Interacts with the PH domain of BTK. Isoform 2 does not interact with BTK. In terms of tissue distribution, expressed in DeFew, HEK293T, HeLa and in Jurkat, MC3 and NB4 lymphoid cells (at protein level). Isoform 1 is the predominant isoform expressed in all examined tissues and cell lines. Highly expressed in hemopoietic tissues (fetal liver, spleen, lymph node, thymus, peripheral blood leukocytes and bone marrow). Weakly or not expressed in other tissues.

The protein resides in the cytoplasm. It localises to the membrane. Its subcellular location is the nucleus. Acts as an inhibitor of BTK tyrosine kinase activity, thereby playing a role in B-cell development. Down-regulates BTK kinase activity, leading to interference with BTK-mediated calcium mobilization and NF-kappa-B-driven transcription. In Homo sapiens (Human), this protein is Inhibitor of Bruton tyrosine kinase (IBTK).